The chain runs to 301 residues: Protein FdhE homolog (301 aa).

Belongs to the FdhE family.

It is found in the cytoplasm. In terms of biological role, necessary for formate dehydrogenase activity. In Erwinia tasmaniensis (strain DSM 17950 / CFBP 7177 / CIP 109463 / NCPPB 4357 / Et1/99), this protein is Protein FdhE homolog.